Reading from the N-terminus, the 121-residue chain is Holo-[acyl-carrier-protein] synthase (121 aa).

Residues Asp-8 and Glu-58 each contribute to the Mg(2+) site.

This sequence belongs to the P-Pant transferase superfamily. AcpS family. Mg(2+) is required as a cofactor.

Its subcellular location is the cytoplasm. It catalyses the reaction apo-[ACP] + CoA = holo-[ACP] + adenosine 3',5'-bisphosphate + H(+). Transfers the 4'-phosphopantetheine moiety from coenzyme A to a Ser of acyl-carrier-protein. The sequence is that of Holo-[acyl-carrier-protein] synthase from Bacillus pumilus (strain SAFR-032).